A 439-amino-acid polypeptide reads, in one-letter code: MKQSRIPRDPDGLPPLRAWLVGGGTGGHVYPALAVAAALNAHGAQFVVADTDGGRNRAMSRHTRWSALYVGSVGGMEAALVARESALPFHALPAAAVRGRNPLTMVRNLITLARGTGAAHRLIARDRPAAILGTGGYVCVPVFLAARLACVPTVIYQPDVVPGLAVRLLARLANLVACSVADSGRYLGLTPVDFERAVPQLETQNRTVRLIVTGYPVRQELFHADRRACRAVFGLSDDLPTLLVAGGSRGARSINRAIAALLPSLLPLMEIIHVCGREGDATFLRAAIRVLPENLQKRYHLFEYLHSAPDISGQEGLPSTPTMIAALVAADLAVCRSGASILGELPAVGLPAVLAPYPYVHQDENADYLVQRGAAVKVSDAALADTTEKGSLFRAIYRLLNCPEERRAMAERARALAQPDAAQKLAFLLETLVIRRQTA.

UDP-N-acetyl-alpha-D-glucosamine-binding positions include 25-27 (TGG), R218, S248, and Q362.

The protein belongs to the glycosyltransferase 28 family. MurG subfamily.

The protein localises to the cell membrane. The enzyme catalyses di-trans,octa-cis-undecaprenyl diphospho-N-acetyl-alpha-D-muramoyl-L-alanyl-D-glutamyl-meso-2,6-diaminopimeloyl-D-alanyl-D-alanine + UDP-N-acetyl-alpha-D-glucosamine = di-trans,octa-cis-undecaprenyl diphospho-[N-acetyl-alpha-D-glucosaminyl-(1-&gt;4)]-N-acetyl-alpha-D-muramoyl-L-alanyl-D-glutamyl-meso-2,6-diaminopimeloyl-D-alanyl-D-alanine + UDP + H(+). It functions in the pathway cell wall biogenesis; peptidoglycan biosynthesis. Functionally, cell wall formation. Catalyzes the transfer of a GlcNAc subunit on undecaprenyl-pyrophosphoryl-MurNAc-pentapeptide (lipid intermediate I) to form undecaprenyl-pyrophosphoryl-MurNAc-(pentapeptide)GlcNAc (lipid intermediate II). This Roseiflexus sp. (strain RS-1) protein is UDP-N-acetylglucosamine--N-acetylmuramyl-(pentapeptide) pyrophosphoryl-undecaprenol N-acetylglucosamine transferase.